The following is a 98-amino-acid chain: UPF0358 protein LCA_1078 (98 aa).

It belongs to the UPF0358 family.

The sequence is that of UPF0358 protein LCA_1078 from Latilactobacillus sakei subsp. sakei (strain 23K) (Lactobacillus sakei subsp. sakei).